The chain runs to 350 residues: S-adenosylmethionine:tRNA ribosyltransferase-isomerase (350 aa).

This sequence belongs to the QueA family. As to quaternary structure, monomer.

It is found in the cytoplasm. It catalyses the reaction 7-aminomethyl-7-carbaguanosine(34) in tRNA + S-adenosyl-L-methionine = epoxyqueuosine(34) in tRNA + adenine + L-methionine + 2 H(+). The protein operates within tRNA modification; tRNA-queuosine biosynthesis. Its function is as follows. Transfers and isomerizes the ribose moiety from AdoMet to the 7-aminomethyl group of 7-deazaguanine (preQ1-tRNA) to give epoxyqueuosine (oQ-tRNA). The sequence is that of S-adenosylmethionine:tRNA ribosyltransferase-isomerase from Aliivibrio fischeri (strain MJ11) (Vibrio fischeri).